The sequence spans 406 residues: Serine hydroxymethyltransferase (406 aa).

(6S)-5,6,7,8-tetrahydrofolate contacts are provided by residues leucine 111 and 115 to 117; that span reads GHL. Lysine 220 is subject to N6-(pyridoxal phosphate)lysine.

The protein belongs to the SHMT family. In terms of assembly, homodimer. Pyridoxal 5'-phosphate serves as cofactor.

Its subcellular location is the cytoplasm. The enzyme catalyses (6R)-5,10-methylene-5,6,7,8-tetrahydrofolate + glycine + H2O = (6S)-5,6,7,8-tetrahydrofolate + L-serine. Its pathway is one-carbon metabolism; tetrahydrofolate interconversion. It participates in amino-acid biosynthesis; glycine biosynthesis; glycine from L-serine: step 1/1. Its function is as follows. Catalyzes the reversible interconversion of serine and glycine with tetrahydrofolate (THF) serving as the one-carbon carrier. This reaction serves as the major source of one-carbon groups required for the biosynthesis of purines, thymidylate, methionine, and other important biomolecules. Also exhibits THF-independent aldolase activity toward beta-hydroxyamino acids, producing glycine and aldehydes, via a retro-aldol mechanism. The chain is Serine hydroxymethyltransferase from Mycoplasma pneumoniae (strain ATCC 29342 / M129 / Subtype 1) (Mycoplasmoides pneumoniae).